The chain runs to 127 residues: Ribonuclease P protein component (127 aa).

It belongs to the RnpA family. In terms of assembly, consists of a catalytic RNA component (M1 or rnpB) and a protein subunit.

It catalyses the reaction Endonucleolytic cleavage of RNA, removing 5'-extranucleotides from tRNA precursor.. Its function is as follows. RNaseP catalyzes the removal of the 5'-leader sequence from pre-tRNA to produce the mature 5'-terminus. It can also cleave other RNA substrates such as 4.5S RNA. The protein component plays an auxiliary but essential role in vivo by binding to the 5'-leader sequence and broadening the substrate specificity of the ribozyme. This chain is Ribonuclease P protein component, found in Corynebacterium urealyticum (strain ATCC 43042 / DSM 7109).